We begin with the raw amino-acid sequence, 532 residues long: MEGDSYGNATTINGTPVNHQPLERHRLWEVITIAAVTAVVSLITIVGNVLVMISFKVNSQLKTVNNYYLLSLACADLIIGIFSMNLYTTYILMGRWALGSLACDLWLALDYVASNASVMNLLVISFDRYFSITRPLTYRAKRTPKRAGIMIGLAWLISFILWAPAILCWQYLVGKRTVPPDECQIQFLSEPTITFGTAIAAFYIPVSVMTILYCRIYRETEKRTKDLADLQGSVSVTKAEKRKPAHRALFRSCFRCPRPTLVQRERNQASRSSSHRSTSITGKPSQATGPSTNWAKAEELTTCSSYPSSEDEDKPATDPVLQVVYKSQGKESPGEEFSAEEAEETFVKGQTDKNDCDSPDYFLSPAAAHRPKSQQCVAYKFQLVVKADGTQETNNGCHKVKIMPCSFPVAKEPSTKGLSPNLSHQMTKRKRMVLVKERKAAQTLSAILLAFIITWTPYNIMVLVSTFCDKCVPVALWHLGYWLCYVNSTVNPICYALCNRTFRKTFKMLLLCQWKKKKVEEKLYWQGNSKLP.

Residues 1-29 (MEGDSYGNATTINGTPVNHQPLERHRLWE) are Extracellular-facing. N-linked (GlcNAc...) asparagine glycosylation occurs at Asn-8. A helical transmembrane segment spans residues 30-53 (VITIAAVTAVVSLITIVGNVLVMI). At 54–66 (SFKVNSQLKTVNN) the chain is on the cytoplasmic side. The helical transmembrane segment at 67 to 87 (YYLLSLACADLIIGIFSMNLY) threads the bilayer. Residues 88 to 104 (TTYILMGRWALGSLACD) are Extracellular-facing. Residues 105–126 (LWLALDYVASNASVMNLLVISF) form a helical membrane-spanning segment. At 127-146 (DRYFSITRPLTYRAKRTPKR) the chain is on the cytoplasmic side. A helical transmembrane segment spans residues 147 to 169 (AGIMIGLAWLISFILWAPAILCW). Over 170–191 (QYLVGKRTVPPDECQIQFLSEP) the chain is Extracellular. Residues 192-214 (TITFGTAIAAFYIPVSVMTILYC) form a helical membrane-spanning segment. Topologically, residues 215-443 (RIYRETEKRT…LVKERKAAQT (229 aa)) are cytoplasmic. The disordered stretch occupies residues 263–294 (QRERNQASRSSSHRSTSITGKPSQATGPSTNW). The segment covering 270–279 (SRSSSHRSTS) has biased composition (low complexity). A compositionally biased stretch (polar residues) spans 280–294 (ITGKPSQATGPSTNW). Residues 444–464 (LSAILLAFIITWTPYNIMVLV) traverse the membrane as a helical segment. The Extracellular portion of the chain corresponds to 465-478 (STFCDKCVPVALWH). The helical transmembrane segment at 479-498 (LGYWLCYVNSTVNPICYALC) threads the bilayer. Residues 499–532 (NRTFRKTFKMLLLCQWKKKKVEEKLYWQGNSKLP) lie on the Cytoplasmic side of the membrane. Phosphothreonine occurs at positions 501 and 505.

The protein belongs to the G-protein coupled receptor 1 family. Muscarinic acetylcholine receptor subfamily. CHRM5 sub-subfamily.

It localises to the cell membrane. The protein localises to the postsynaptic cell membrane. Its function is as follows. The muscarinic acetylcholine receptor mediates various cellular responses, including inhibition of adenylate cyclase, breakdown of phosphoinositides and modulation of potassium channels through the action of G proteins. Primary transducing effect is Pi turnover. In Saimiri boliviensis boliviensis (Bolivian squirrel monkey), this protein is Muscarinic acetylcholine receptor M5 (CHRM5).